We begin with the raw amino-acid sequence, 169 residues long: Ubiquitin-fold modifier-conjugating enzyme 1 (169 aa).

Cysteine 116 acts as the Glycyl thioester intermediate in catalysis.

This sequence belongs to the ubiquitin-conjugating enzyme family. UFC1 subfamily.

In terms of biological role, E2-like enzyme which forms an intermediate with UFM1 via a thioester linkage. The protein is Ubiquitin-fold modifier-conjugating enzyme 1 of Nematostella vectensis (Starlet sea anemone).